Consider the following 620-residue polypeptide: MSFDIAKYPTLALVDSTSELRLLPKESLPKLCDELRRYLLDSVSRSSGHFASGLGTVELTVALHYVYNTPFDQLIWDVGHQAYPHKILTGRRDKIGTIRQKGGLHPFPWRGESEYDVLSVGHSSTSISAGIGIAVAAEKEGKDRRTVCVIGDGAITAGMAFEAMNHAGDIKPDMLVILNDNEMSISENVGALNNHLAQLLSGKLYSSLREGGKKVFSGVPPIKELLKRTEEHIKGMVVPGTLFEELGFNYIGPVDGHDVLGLITTLKNMRDLKGPQFLHIMTKKGRGYEPAEKDPITFHAVPKFDPSSGCLPKSSGGLPSYSKIFGDWLCETAAKDSKLMAITPAMREGSGMVEFSRKFPDRYFDVAIAEQHAVTFAAGLAIGGYKPIVAIYSTFLQRAYDQVLHDVAIQKLPVMFAIDRAGIVGADGQTHQGAFDLSYLRCIPEMVIMTPGDENECRQMLYTGYHYNDGPTAVRYPRGNAVGVELTPLEKLPIGKGLVKRQGEKLAILNFGTLLPEAAKVAESLNATLVDMRFVKPLDETLILEMAERHEVLITLEENAIMGGAGSGVNEVLMAHRKVVPVLNIGLPDFFIPQGTQDEARAELGLDAAGIEAKIKDWLA.

Residues H80 and 121–123 (GHS) contribute to the thiamine diphosphate site. A Mg(2+)-binding site is contributed by D152. Thiamine diphosphate contacts are provided by residues 153-154 (GA), N181, Y288, and E370. A Mg(2+)-binding site is contributed by N181.

This sequence belongs to the transketolase family. DXPS subfamily. Homodimer. Mg(2+) serves as cofactor. Thiamine diphosphate is required as a cofactor.

It carries out the reaction D-glyceraldehyde 3-phosphate + pyruvate + H(+) = 1-deoxy-D-xylulose 5-phosphate + CO2. The protein operates within metabolic intermediate biosynthesis; 1-deoxy-D-xylulose 5-phosphate biosynthesis; 1-deoxy-D-xylulose 5-phosphate from D-glyceraldehyde 3-phosphate and pyruvate: step 1/1. Its function is as follows. Catalyzes the acyloin condensation reaction between C atoms 2 and 3 of pyruvate and glyceraldehyde 3-phosphate to yield 1-deoxy-D-xylulose-5-phosphate (DXP). The protein is 1-deoxy-D-xylulose-5-phosphate synthase of Citrobacter koseri (strain ATCC BAA-895 / CDC 4225-83 / SGSC4696).